We begin with the raw amino-acid sequence, 461 residues long: NADP-specific glutamate dehydrogenase (461 aa).

The active site involves Lys115.

It belongs to the Glu/Leu/Phe/Val dehydrogenases family. As to quaternary structure, homohexamer.

It catalyses the reaction L-glutamate + NADP(+) + H2O = 2-oxoglutarate + NH4(+) + NADPH + H(+). The chain is NADP-specific glutamate dehydrogenase (GDH) from Penicillium chrysogenum (Penicillium notatum).